A 234-amino-acid polypeptide reads, in one-letter code: C2H2-type zinc-finger transcription factor clz7 (234 aa).

Disordered regions lie at residues 45–99 (RPEG…SRVD) and 118–154 (SAQP…NGTA). Composition is skewed to low complexity over residues 66–77 (SQSSNTSPTSES) and 140–154 (SSGT…NGTA). A C2H2-type 1; degenerate zinc finger spans residues 159-184 (NRCWDHGCNGKKFLNHSNLVRHRREN). The segment at 191 to 223 (FICPMCGAYFSRSTARNQHLEKKSCNRVRRYSN) adopts a C2H2-type 2; degenerate zinc-finger fold.

It belongs to the GLI C2H2-type zinc-finger protein family.

It is found in the nucleus. In terms of biological role, transcription factor that probably regulates the expression of the gene cluster that mediates the biosynthesis of squalestatin S1 (SQS1, also known as zaragozic acid A), a heavily oxidized fungal polyketide that offers potent cholesterol lowering activity by targeting squalene synthase (SS). The chain is C2H2-type zinc-finger transcription factor clz7 from Cochliobolus lunatus (Filamentous fungus).